A 290-amino-acid polypeptide reads, in one-letter code: Ribosomal RNA small subunit methyltransferase A (290 aa).

Residues Asn27, Leu29, Gly54, Glu75, Asp100, and Asn125 each contribute to the S-adenosyl-L-methionine site.

The protein belongs to the class I-like SAM-binding methyltransferase superfamily. rRNA adenine N(6)-methyltransferase family. RsmA subfamily.

The protein localises to the cytoplasm. It catalyses the reaction adenosine(1518)/adenosine(1519) in 16S rRNA + 4 S-adenosyl-L-methionine = N(6)-dimethyladenosine(1518)/N(6)-dimethyladenosine(1519) in 16S rRNA + 4 S-adenosyl-L-homocysteine + 4 H(+). Its function is as follows. Specifically dimethylates two adjacent adenosines (A1518 and A1519) in the loop of a conserved hairpin near the 3'-end of 16S rRNA in the 30S particle. May play a critical role in biogenesis of 30S subunits. This chain is Ribosomal RNA small subunit methyltransferase A, found in Streptococcus pyogenes serotype M1.